Consider the following 261-residue polypeptide: tRNA pseudouridine synthase A (261 aa).

Asp52 (nucleophile) is an active-site residue. Tyr111 is a binding site for substrate.

This sequence belongs to the tRNA pseudouridine synthase TruA family. As to quaternary structure, homodimer.

It catalyses the reaction uridine(38/39/40) in tRNA = pseudouridine(38/39/40) in tRNA. In terms of biological role, formation of pseudouridine at positions 38, 39 and 40 in the anticodon stem and loop of transfer RNAs. This Jannaschia sp. (strain CCS1) protein is tRNA pseudouridine synthase A.